The chain runs to 968 residues: Leucine--tRNA ligase (968 aa).

A compositionally biased stretch (polar residues) spans 1–13 (MTETPTGTQSSRE). A disordered region spans residues 1–22 (MTETPTGTQSSRETAADDTPRH). The 'HIGH' region signature appears at 75 to 86 (PYPSGEGLHVGH). Positions 741 to 745 (KIGKS) match the 'KMSKS' region motif. Lysine 744 lines the ATP pocket.

The protein belongs to the class-I aminoacyl-tRNA synthetase family.

The protein resides in the cytoplasm. It catalyses the reaction tRNA(Leu) + L-leucine + ATP = L-leucyl-tRNA(Leu) + AMP + diphosphate. The sequence is that of Leucine--tRNA ligase from Mycolicibacterium vanbaalenii (strain DSM 7251 / JCM 13017 / BCRC 16820 / KCTC 9966 / NRRL B-24157 / PYR-1) (Mycobacterium vanbaalenii).